The following is a 237-amino-acid chain: Phosphoribosylaminoimidazole-succinocarboxamide synthase (237 aa).

The protein belongs to the SAICAR synthetase family.

The catalysed reaction is 5-amino-1-(5-phospho-D-ribosyl)imidazole-4-carboxylate + L-aspartate + ATP = (2S)-2-[5-amino-1-(5-phospho-beta-D-ribosyl)imidazole-4-carboxamido]succinate + ADP + phosphate + 2 H(+). It participates in purine metabolism; IMP biosynthesis via de novo pathway; 5-amino-1-(5-phospho-D-ribosyl)imidazole-4-carboxamide from 5-amino-1-(5-phospho-D-ribosyl)imidazole-4-carboxylate: step 1/2. This is Phosphoribosylaminoimidazole-succinocarboxamide synthase from Marinobacter nauticus (strain ATCC 700491 / DSM 11845 / VT8) (Marinobacter aquaeolei).